The sequence spans 320 residues: 1-aminocyclopropane-1-carboxylate oxidase 3 (320 aa).

The region spanning 154–254 (PNFGTKVSNY…RMSIASFYNP (101 aa)) is the Fe2OG dioxygenase domain. The Fe cation site is built by H178, D180, and H235.

It belongs to the iron/ascorbate-dependent oxidoreductase family. Requires Fe cation as cofactor. Flowers.

The catalysed reaction is 1-aminocyclopropane-1-carboxylate + L-ascorbate + O2 = ethene + L-dehydroascorbate + hydrogen cyanide + CO2 + 2 H2O. The protein operates within alkene biosynthesis; ethylene biosynthesis via S-adenosyl-L-methionine; ethylene from S-adenosyl-L-methionine: step 2/2. The polypeptide is 1-aminocyclopropane-1-carboxylate oxidase 3 (ACO3) (Cucumis melo (Muskmelon)).